A 203-amino-acid chain; its full sequence is Thymidylate kinase (203 aa).

10–17 (GIDGCGKT) provides a ligand contact to ATP.

The protein belongs to the thymidylate kinase family.

The catalysed reaction is dTMP + ATP = dTDP + ADP. Its function is as follows. Phosphorylation of dTMP to form dTDP in both de novo and salvage pathways of dTTP synthesis. The sequence is that of Thymidylate kinase from Thermoanaerobacter pseudethanolicus (strain ATCC 33223 / 39E) (Clostridium thermohydrosulfuricum).